A 158-amino-acid chain; its full sequence is Succinate dehydrogenase [ubiquinone] cytochrome b small subunit B, mitochondrial (158 aa).

The transit peptide at 1–29 directs the protein to the mitochondrion; the sequence is MAALVRISSLCHRGVSPLLFRPSSLIRPL. The Mitochondrial matrix segment spans residues 30–62; it reads AVQQKDHDCSYLISARIHATPSNYAGSGSKAAT. The chain crosses the membrane as a helical span at residues 63–84; it reads MHWTGERILSIALLSLAPVAYF. Residues 85–89 lie on the Mitochondrial intermembrane side of the membrane; that stretch reads CPSPA. A helical transmembrane segment spans residues 90–110; that stretch reads VDYSLAAALTLHGHWGLGQVV. His-101 serves as a coordination point for heme b. The Mitochondrial matrix portion of the chain corresponds to 111–119; that stretch reads TDYVHGDAK. Tyr-113 contacts a ubiquinone. A helical transmembrane segment spans residues 120-141; sequence IKMANAGLFVLSTVTFAGLCYF. Residues 142–158 lie on the Mitochondrial intermembrane side of the membrane; it reads NYHDVGICKAVALLWSK.

It belongs to the CybS family. In terms of assembly, component of complex II composed of four subunits: the flavoprotein (FP) SDHA, iron-sulfur protein (IP) SDHB, and a cytochrome b560 composed of SDHC and SDHD.

It localises to the mitochondrion inner membrane. It participates in carbohydrate metabolism; tricarboxylic acid cycle. Functionally, membrane-anchoring subunit of succinate dehydrogenase (SDH) that is involved in complex II of the mitochondrial electron transport chain and is responsible for transferring electrons from succinate to ubiquinone (coenzyme Q). SDH also oxidizes malate to the non-canonical enol form of oxaloacetate, enol-oxaloacetate. Enol-oxaloacetate, which is a potent inhibitor of the succinate dehydrogenase activity, is further isomerized into keto-oxaloacetate. The sequence is that of Succinate dehydrogenase [ubiquinone] cytochrome b small subunit B, mitochondrial (sdhdb) from Danio rerio (Zebrafish).